Consider the following 481-residue polypeptide: UDP-N-acetylmuramoylalanine--D-glutamate ligase (481 aa).

An ATP-binding site is contributed by 108 to 114 (GTNGKTS).

The protein belongs to the MurCDEF family.

Its subcellular location is the cytoplasm. It carries out the reaction UDP-N-acetyl-alpha-D-muramoyl-L-alanine + D-glutamate + ATP = UDP-N-acetyl-alpha-D-muramoyl-L-alanyl-D-glutamate + ADP + phosphate + H(+). The protein operates within cell wall biogenesis; peptidoglycan biosynthesis. In terms of biological role, cell wall formation. Catalyzes the addition of glutamate to the nucleotide precursor UDP-N-acetylmuramoyl-L-alanine (UMA). The protein is UDP-N-acetylmuramoylalanine--D-glutamate ligase of Bifidobacterium longum (strain DJO10A).